The following is a 154-amino-acid chain: NADPH-dependent 7-cyano-7-deazaguanine reductase (154 aa).

The span at 1–13 shows a compositional bias: polar residues; it reads MSKTDVSGLSQLG. The disordered stretch occupies residues 1–24; sequence MSKTDVSGLSQLGRQVDAPTSPET. The active-site Thioimide intermediate is Cys52. Asp59 (proton donor) is an active-site residue. Substrate contacts are provided by residues 74–76 and 93–94; these read VES and HE.

The protein belongs to the GTP cyclohydrolase I family. QueF type 1 subfamily.

Its subcellular location is the cytoplasm. The enzyme catalyses 7-aminomethyl-7-carbaguanine + 2 NADP(+) = 7-cyano-7-deazaguanine + 2 NADPH + 3 H(+). It functions in the pathway tRNA modification; tRNA-queuosine biosynthesis. In terms of biological role, catalyzes the NADPH-dependent reduction of 7-cyano-7-deazaguanine (preQ0) to 7-aminomethyl-7-deazaguanine (preQ1). The sequence is that of NADPH-dependent 7-cyano-7-deazaguanine reductase from Allorhizobium ampelinum (strain ATCC BAA-846 / DSM 112012 / S4) (Agrobacterium vitis (strain S4)).